A 410-amino-acid polypeptide reads, in one-letter code: Translation initiation factor 2 subunit gamma (410 aa).

The 198-residue stretch at glutamine 6 to glutamate 203 folds into the tr-type G domain. A G1 region spans residues glycine 15 to threonine 22. Positions 18, 22, 43, and 45 each coordinate Mg(2+). Residue aspartate 18–serine 23 coordinates GTP. The segment at glycine 43 to arginine 47 is G2. Residues cysteine 58, cysteine 61, cysteine 73, and cysteine 76 each contribute to the Zn(2+) site. Residues aspartate 90–glycine 93 are G3. GTP is bound by residues asparagine 146–aspartate 149 and serine 181–histidine 183. The interval asparagine 146 to aspartate 149 is G4. The G5 stretch occupies residues serine 181–histidine 183.

Belongs to the TRAFAC class translation factor GTPase superfamily. Classic translation factor GTPase family. EIF2G subfamily. As to quaternary structure, heterotrimer composed of an alpha, a beta and a gamma chain. It depends on Mg(2+) as a cofactor.

It carries out the reaction GTP + H2O = GDP + phosphate + H(+). Its function is as follows. eIF-2 functions in the early steps of protein synthesis by forming a ternary complex with GTP and initiator tRNA. This chain is Translation initiation factor 2 subunit gamma, found in Methanococcus aeolicus (strain ATCC BAA-1280 / DSM 17508 / OCM 812 / Nankai-3).